Reading from the N-terminus, the 427-residue chain is Serine/threonine-protein kinase AFC2 (427 aa).

The Protein kinase domain occupies 98–423; it reads YKIYSKMGEG…AREALRHPFF (326 aa). Residues 104–112 and Lys-127 contribute to the ATP site; that span reads MGEGTFGQV. The Proton acceptor role is filled by Asp-223.

It belongs to the protein kinase superfamily. CMGC Ser/Thr protein kinase family. Lammer subfamily.

It carries out the reaction L-seryl-[protein] + ATP = O-phospho-L-seryl-[protein] + ADP + H(+). The enzyme catalyses L-threonyl-[protein] + ATP = O-phospho-L-threonyl-[protein] + ADP + H(+). It catalyses the reaction L-tyrosyl-[protein] + ATP = O-phospho-L-tyrosyl-[protein] + ADP + H(+). In Arabidopsis thaliana (Mouse-ear cress), this protein is Serine/threonine-protein kinase AFC2 (AFC2).